The primary structure comprises 296 residues: MAFKYHKVAIIGKHYKKEVSQMVETLYAYLQQQGLEIIIENDTAVDTSLVNVAIASLKEIALRCDVAIVVGGDGNFLKASRLLALYSNIPVIGINKGKLGFLTTLAADDNALKNDLYAILKGDSSVTKMSMLKCRVDNNLRAPLEASIALNEIAITASRGLMFGLKVFIDGRYAFDQRGDGLIVSTPTGSTAHAMSAGGPILNPNQNSVVLVPICSHSLNSRPLVISDESVIDIYITDYNDPEPVLSIDGRHDTILKAHQKVTIQKARKKVTVLHTKDYNYYDTLREKLGWSKVLF.

Residue aspartate 73 is the Proton acceptor of the active site. NAD(+) is bound by residues 73-74, lysine 78, 151-152, arginine 178, aspartate 180, and 191-196; these read DG, NE, and TAHAMS.

Belongs to the NAD kinase family. Requires a divalent metal cation as cofactor.

Its subcellular location is the cytoplasm. The enzyme catalyses NAD(+) + ATP = ADP + NADP(+) + H(+). Involved in the regulation of the intracellular balance of NAD and NADP, and is a key enzyme in the biosynthesis of NADP. Catalyzes specifically the phosphorylation on 2'-hydroxyl of the adenosine moiety of NAD to yield NADP. This Francisella tularensis subsp. novicida (strain U112) protein is NAD kinase.